We begin with the raw amino-acid sequence, 131 residues long: Large ribosomal subunit protein eL32 (131 aa).

Belongs to the eukaryotic ribosomal protein eL32 family. Component of the large ribosomal subunit. Mature ribosomes consist of a small (40S) and a large (60S) subunit. The 40S subunit contains about 32 different proteins and 1 molecule of RNA (18S). The 60S subunit contains 45 different proteins and 3 molecules of RNA (25S, 5.8S and 5S).

It localises to the cytoplasm. Component of the ribosome, a large ribonucleoprotein complex responsible for the synthesis of proteins in the cell. The small ribosomal subunit (SSU) binds messenger RNAs (mRNAs) and translates the encoded message by selecting cognate aminoacyl-transfer RNA (tRNA) molecules. The large subunit (LSU) contains the ribosomal catalytic site termed the peptidyl transferase center (PTC), which catalyzes the formation of peptide bonds, thereby polymerizing the amino acids delivered by tRNAs into a polypeptide chain. The nascent polypeptides leave the ribosome through a tunnel in the LSU and interact with protein factors that function in enzymatic processing, targeting, and the membrane insertion of nascent chains at the exit of the ribosomal tunnel. The sequence is that of Large ribosomal subunit protein eL32 from Candida albicans (strain SC5314 / ATCC MYA-2876) (Yeast).